A 349-amino-acid polypeptide reads, in one-letter code: 1-acylglycerol-3-phosphate O-acyltransferase ABHD5 (349 aa).

At Ala2 the chain carries N-acetylalanine. In terms of domain architecture, AB hydrolase-1 spans 77–184; it reads PLVLLHGFGG…LVEPWGFPER (108 aa). The residue at position 122 (Ser122) is a Phosphoserine. The HXXXXD motif signature appears at 327-332; that stretch reads HYVYAD.

Belongs to the peptidase S33 family. ABHD4/ABHD5 subfamily. In terms of assembly, interacts with ADRP, PLIN and PNPLA2. Interacts with PLIN5; promotes interaction with PNPLA2. As to expression, widely expressed in various tissues, including lymphocytes, liver, skeletal muscle and brain. Expressed by upper epidermal layers and dermal fibroblasts in skin, hepatocytes and neurons (at protein level).

Its subcellular location is the cytoplasm. The protein resides in the lipid droplet. It is found in the cytosol. It catalyses the reaction a 1-acyl-sn-glycero-3-phosphate + an acyl-CoA = a 1,2-diacyl-sn-glycero-3-phosphate + CoA. The enzyme catalyses 1-(9Z-octadecenoyl)-sn-glycero-3-phosphate + hexadecanoyl-CoA = 1-(9Z)-octadecenoyl-2-hexadecanoyl-sn-glycero-3-phosphate + CoA. The catalysed reaction is 1-(9Z-octadecenoyl)-sn-glycero-3-phosphate + octadecanoyl-CoA = 1-(9Z-octadecenoyl)-2-octadecanoyl-sn-glycero-3-phosphate + CoA. It carries out the reaction 1-(9Z-octadecenoyl)-sn-glycero-3-phosphate + (9Z)-octadecenoyl-CoA = 1,2-di-(9Z-octadecenoyl)-sn-glycero-3-phosphate + CoA. It catalyses the reaction 1-(9Z-octadecenoyl)-sn-glycero-3-phosphate + (5Z,8Z,11Z,14Z)-eicosatetraenoyl-CoA = 1-(9Z)-octadecenoyl-2-(5Z,8Z,11Z,14Z)-eicosatetraenoyl-sn-glycero-3-phosphate + CoA. The enzyme catalyses eicosanoyl-CoA + 1-(9Z-octadecenoyl)-sn-glycero-3-phosphate = 1-(9Z)-octadecenoyl-2-eicosanoyl-sn-glycero-3-phosphate + CoA. The catalysed reaction is 1-hexadecanoyl-sn-glycero-3-phosphate + (9Z)-octadecenoyl-CoA = 1-hexadecanoyl-2-(9Z-octadecenoyl)-sn-glycero-3-phosphate + CoA. It carries out the reaction 1-octadecanoyl-sn-glycero-3-phosphate + (9Z)-octadecenoyl-CoA = 1-octadecanoyl-2-(9Z-octadecenoyl)-sn-glycero-3-phosphate + CoA. It catalyses the reaction 1-(5Z,8Z,11Z,14Z-eicosatetraenoyl)-sn-glycero-3-phosphate + (9Z)-octadecenoyl-CoA = 1-(5Z,8Z,11Z,14Z)-eicosatetraenoyl-2-(9Z)-octadecenoyl-sn-glycero-3-phosphate + CoA. With respect to regulation, acyltransferase activity is inhibited by detergents such as Triton X-100 and 3-[(3-cholamidopropyl)dimethylammonio]-1-propanesulfonate (CHAPS). Acyltransferase activity is inhibited by the presence of magnesium and calcium. Coenzyme A-dependent lysophosphatidic acid acyltransferase that catalyzes the transfer of an acyl group on a lysophosphatidic acid. Functions preferentially with 1-oleoyl-lysophosphatidic acid followed by 1-palmitoyl-lysophosphatidic acid, 1-stearoyl-lysophosphatidic acid and 1-arachidonoyl-lysophosphatidic acid as lipid acceptor. Functions preferentially with arachidonoyl-CoA followed by oleoyl-CoA as acyl group donors. Functions in phosphatidic acid biosynthesis. May regulate the cellular storage of triacylglycerol through activation of the phospholipase PNPLA2. Involved in keratinocyte differentiation. Regulates lipid droplet fusion. The polypeptide is 1-acylglycerol-3-phosphate O-acyltransferase ABHD5 (Homo sapiens (Human)).